The primary structure comprises 479 residues: Cobyric acid synthase (479 aa).

In terms of domain architecture, GATase cobBQ-type spans 250-442; the sequence is TRTVAVVAYP…LHGLFEDAAA (193 aa). Residue C331 is the Nucleophile of the active site. H434 is a catalytic residue.

It belongs to the CobB/CobQ family. CobQ subfamily.

The protein operates within cofactor biosynthesis; adenosylcobalamin biosynthesis. In terms of biological role, catalyzes amidations at positions B, D, E, and G on adenosylcobyrinic A,C-diamide. NH(2) groups are provided by glutamine, and one molecule of ATP is hydrogenolyzed for each amidation. The protein is Cobyric acid synthase of Variovorax paradoxus (strain S110).